A 1428-amino-acid polypeptide reads, in one-letter code: DNA polymerase III PolC-type (1428 aa).

Residues 414–570 enclose the Exonuclease domain; sequence FVVFDVETTG…YDAEATGYLL (157 aa).

The protein belongs to the DNA polymerase type-C family. PolC subfamily.

The protein resides in the cytoplasm. It catalyses the reaction DNA(n) + a 2'-deoxyribonucleoside 5'-triphosphate = DNA(n+1) + diphosphate. Its function is as follows. Required for replicative DNA synthesis. This DNA polymerase also exhibits 3' to 5' exonuclease activity. This Oceanobacillus iheyensis (strain DSM 14371 / CIP 107618 / JCM 11309 / KCTC 3954 / HTE831) protein is DNA polymerase III PolC-type.